Consider the following 443-residue polypeptide: D(2) dopamine receptor (443 aa).

Over 1–37 (MDPLNLSWYDDDLESQNWSRPFNGSEGKPGKPHYNYY) the chain is Extracellular. N-linked (GlcNAc...) asparagine glycosylation is found at Asn-5, Asn-17, and Asn-23. The helical transmembrane segment at 38 to 60 (AMLLTLLIFIIVFGNVLVCMAVS) threads the bilayer. The Cytoplasmic segment spans residues 61-70 (REKALQTTTN). Residues 71-93 (YLIVSLAVADLLVATLVMPWVVY) form a helical membrane-spanning segment. Topologically, residues 94 to 108 (LEVVGEWKFSRIHCD) are extracellular. Cysteines 107 and 182 form a disulfide. A helical transmembrane segment spans residues 109 to 130 (IFVTLDVMMCTASILNLCAISI). The Cytoplasmic portion of the chain corresponds to 131–151 (DRYTAVAMPMLYNTRYSSKRR). A helical membrane pass occupies residues 152–172 (VTVMIAIVWVLSFTISCPLLF). The Extracellular portion of the chain corresponds to 173 to 188 (GLNNTDQNECIIANPA). Residues 189 to 213 (FVVYSSIVSFYVPFIVTLLVYIKIY) traverse the membrane as a helical segment. The interval 211 to 373 (KIYIVLRRRR…SQQKEKKATQ (163 aa)) is interaction with PPP1R9B. Topologically, residues 214–373 (IVLRRRRKRV…SQQKEKKATQ (160 aa)) are cytoplasmic. The disordered stretch occupies residues 282-332 (EMLSSTSPPERTRYSPIPPSHHQLTLPDPSHHGLHSTADSPAKPEKNGHAK). Residues 323–332 (AKPEKNGHAK) show a composition bias toward basic and acidic residues. Residues 374–395 (MLAIVLGVFIICWLPFFITHIL) form a helical membrane-spanning segment. The Extracellular portion of the chain corresponds to 396-409 (NIHCECNIPPVLYS). A disulfide bridge links Cys-399 with Cys-401. The chain crosses the membrane as a helical span at residues 410–431 (AFTWLGYVNSAVNPIIYTTFNI). At 432 to 443 (EFRKAFLKILHC) the chain is on the cytoplasmic side. Cys-443 carries the S-palmitoyl cysteine lipid modification.

Belongs to the G-protein coupled receptor 1 family. As to quaternary structure, forms homo- and heterooligomers with DRD4. The interaction with DRD4 may modulate agonist-induced downstream signaling. Interacts with CADPS and CADPS2. Interacts with GPRASP1, PPP1R9B and CLIC6. Interacts with ARRB2. Interacts with HTR2A. Interacts with DRD1. Interacts with KCNA2. In terms of processing, palmitoylated. Palmitoylation which is required for proper localization to the plasma membrane and stability of the receptor could be carried on by ZDHHC4, ZDHHC3 and ZDHHC8.

It is found in the cell membrane. The protein resides in the golgi apparatus membrane. Its function is as follows. Dopamine receptor whose activity is mediated by G proteins which inhibit adenylyl cyclase. Positively regulates postnatal regression of retinal hyaloid vessels via suppression of VEGFR2/KDR activity, downstream of OPN5. The polypeptide is D(2) dopamine receptor (DRD2) (Canis lupus familiaris (Dog)).